A 239-amino-acid polypeptide reads, in one-letter code: Isopentenyl-diphosphate Delta-isomerase (239 aa).

Position 43 (lysine 43) interacts with substrate. Mg(2+) is bound by residues histidine 47 and histidine 58. The Nudix hydrolase domain occupies leucine 56 to leucine 210. Substrate-binding residues include arginine 77 and lysine 81. Cysteine 93 is an active-site residue. Position 94 (serine 94) interacts with substrate. Positions 156 and 158 each coordinate Mg(2+). The active site involves glutamate 158.

This sequence belongs to the IPP isomerase type 1 family. Mg(2+) serves as cofactor.

The enzyme catalyses isopentenyl diphosphate = dimethylallyl diphosphate. The protein operates within isoprenoid biosynthesis; dimethylallyl diphosphate biosynthesis; dimethylallyl diphosphate from isopentenyl diphosphate: step 1/1. Functionally, catalyzes the 1,3-allylic rearrangement of the homoallylic substrate isopentenyl (IPP) to its highly electrophilic allylic isomer, dimethylallyl diphosphate (DMAPP). The polypeptide is Isopentenyl-diphosphate Delta-isomerase (ipi) (Dictyostelium discoideum (Social amoeba)).